We begin with the raw amino-acid sequence, 547 residues long: Sodium/hydrogen exchanger 9B2 (547 aa).

The segment at 1–68 is disordered; the sequence is MEDEDKTAEC…PQDSPTEPNG (68 aa). Residues 1–86 are Cytoplasmic-facing; it reads MEDEDKTAEC…ACPPRGCLAR (86 aa). Basic and acidic residues predominate over residues 23-45; that stretch reads APPHHELQEERVMSLRGTDRSEP. Phosphoserine is present on S49. A helical membrane pass occupies residues 87–104; sequence VITNGTMVVLLWAMVWSV. The Extracellular portion of the chain corresponds to 105–113; that stretch reads TGPECLPGG. Residues 114-133 form a helical membrane-spanning segment; that stretch reads NLFGIIILFYCSITGGKLFG. At 134 to 144 the chain is on the cytoplasmic side; sequence LIKFPTLPPLP. The chain crosses the membrane as a helical span at residues 145-161; that stretch reads PLLGMLLAGFLLRNIPV. Residues 162–171 lie on the Extracellular side of the membrane; the sequence is INDSVRIQHK. A helical transmembrane segment spans residues 172 to 189; that stretch reads WSSSLRSIALSVILVRAG. The Cytoplasmic portion of the chain corresponds to 190-200; sequence LGLDSKALRKL. A helical membrane pass occupies residues 201 to 227; it reads KGVCVRLAMGPCIVEACASAILSHFLM. Over 228–233 the chain is Extracellular; sequence GLPWQW. A helical membrane pass occupies residues 234–242; sequence GFILGFVVG. Residues 243 to 270 are Cytoplasmic-facing; sequence AVSPAVVVPSMLLLQEGGYGVGKGIPTL. Na(+) is bound by residues V244, G275, D278, and D279. A helical transmembrane segment spans residues 271-290; it reads LMAAGSFDDILAITGFNTCL. Over 291–300 the chain is Extracellular; that stretch reads GVAFSTGSTV. The chain crosses the membrane as a helical span at residues 301–324; sequence FNIFRGILEVVIGVAAGSFLGFFI. Residues 325 to 339 are Cytoplasmic-facing; that stretch reads QYFPSRDQDNLVWKR. Residues 340-357 traverse the membrane as a helical segment; the sequence is AFLVLGFAVLAVFSSVYF. Over 358–361 the chain is Extracellular; sequence SFPG. A helical membrane pass occupies residues 362-373; it reads SGGLCTLVMAFL. The Cytoplasmic segment spans residues 374–390; that stretch reads AGMRWTDKKSEVEKVIA. Residues 391-411 form a helical membrane-spanning segment; the sequence is VTWDVFQPLLFGLIGAEVSIV. Over 412 to 417 the chain is Extracellular; the sequence is SLRAET. A helical transmembrane segment spans residues 418 to 440; the sequence is VGLCVATLSIAVLIRILTTFLMV. At 441–461 the chain is on the cytoplasmic side; the sequence is CFAGFNIKEKIFISFAWLPKA. The helical transmembrane segment at 462 to 473 threads the bilayer; it reads TVQAAIGSVALD. At 474-486 the chain is on the extracellular side; it reads TARSHGEKQLEDY. A helical transmembrane segment spans residues 487–509; it reads GMDVLTVAFLAILITAPIGSLLI. The Cytoplasmic portion of the chain corresponds to 510–547; it reads GLLGPRVLQKSEHRTEEEVQGETSAHIQRKPEDSITEA. Residues 522–547 form a disordered region; that stretch reads HRTEEEVQGETSAHIQRKPEDSITEA. Residues 538–547 are compositionally biased toward basic and acidic residues; sequence RKPEDSITEA.

It belongs to the monovalent cation:proton antiporter 1 (CPA1) transporter (TC 2.A.36) family. As to quaternary structure, homodimer; dimerization is essential for SLC9B2 activity. Lipids seem to play a role in the stabilization of the dimerization subdomain. In terms of tissue distribution, widely expressed. However expression seems to be restricted to specific cell types within individual organs, e.g. osteoclasts in the bone, distal tubules of the kidney or beta-cells of Langerhans islets. In sperm specifically present in the principal piece of sperm tail (at protein level).

It localises to the cell membrane. The protein localises to the mitochondrion membrane. The protein resides in the endosome membrane. It is found in the lysosome membrane. Its subcellular location is the recycling endosome membrane. It localises to the cytoplasmic vesicle. The protein localises to the secretory vesicle. The protein resides in the synaptic vesicle membrane. It is found in the cell projection. Its subcellular location is the cilium. It localises to the flagellum membrane. The protein localises to the basolateral cell membrane. The protein resides in the apical cell membrane. It carries out the reaction Na(+)(in) + H(+)(out) = Na(+)(out) + H(+)(in). It catalyses the reaction Li(+)(out) + H(+)(in) = Li(+)(in) + H(+)(out). The enzyme catalyses Li(+)(in) + Na(+)(out) = Li(+)(out) + Na(+)(in). With respect to regulation, allosterically inhibited by the N-terminal domain. Inhibited by phloretin. Functionally, electroneutral Na(+) Li(+)/H(+) antiporter that extrudes Na(+) or Li(+) in exchange for external protons across the membrane. Uses the proton gradient/membrane potential to extrude sodium. Contributes to the regulation of intracellular pH and sodium homeostasis. Also able to mediate Na(+)/Li(+) antiporter activity in kidney. May play a physiological role in renal tubular function and blood pressure homeostasis. Plays an important role for insulin secretion and clathrin-mediated endocytosis in beta-cells. Involved in sperm motility and fertility. It is controversial whether SLC9B2 plays a role in osteoclast differentiation or not. The polypeptide is Sodium/hydrogen exchanger 9B2 (Mus musculus (Mouse)).